We begin with the raw amino-acid sequence, 117 residues long: Immunoglobulin lambda variable 10-54 (117 aa).

Positions 1-21 are cleaved as a signal peptide; sequence MPWALLLLTLLTHSAVSVVQA. The framework-1 stretch occupies residues 20–43; sequence QAGLTQPPSVSKGLRQTATLTCTG. In terms of domain architecture, Ig-like spans 22-117; that stretch reads GLTQPPSVSK…CSALDSSLSA (96 aa). Cys-41 and Cys-108 form a disulfide bridge. A complementarity-determining-1 region spans residues 44 to 52; sequence NSNIVGNQG. Positions 53–69 are framework-2; sequence AAWLQQHQGHPPKLLSY. Positions 70–72 are complementarity-determining-2; it reads RNN. Positions 73-108 are framework-3; sequence NRPSGISERFSASRSGNTASLTITGLQPEDEADYYC. The segment at 109–117 is complementarity-determining-3; it reads SALDSSLSA.

Immunoglobulins are composed of two identical heavy chains and two identical light chains; disulfide-linked.

It localises to the secreted. The protein localises to the cell membrane. Functionally, v region of the variable domain of immunoglobulin light chains that participates in the antigen recognition. Immunoglobulins, also known as antibodies, are membrane-bound or secreted glycoproteins produced by B lymphocytes. In the recognition phase of humoral immunity, the membrane-bound immunoglobulins serve as receptors which, upon binding of a specific antigen, trigger the clonal expansion and differentiation of B lymphocytes into immunoglobulins-secreting plasma cells. Secreted immunoglobulins mediate the effector phase of humoral immunity, which results in the elimination of bound antigens. The antigen binding site is formed by the variable domain of one heavy chain, together with that of its associated light chain. Thus, each immunoglobulin has two antigen binding sites with remarkable affinity for a particular antigen. The variable domains are assembled by a process called V-(D)-J rearrangement and can then be subjected to somatic hypermutations which, after exposure to antigen and selection, allow affinity maturation for a particular antigen. The sequence is that of Immunoglobulin lambda variable 10-54 from Homo sapiens (Human).